A 227-amino-acid polypeptide reads, in one-letter code: Urease subunit gamma/beta (227 aa).

The urease gamma stretch occupies residues 1-101; the sequence is MRLTPTERDR…LAVVTDPIGG (101 aa). Residues 102–227 form a urease beta region; the sequence is GLGDQAPGAL…ACGYLGVEQR (126 aa).

It in the N-terminal section; belongs to the urease gamma subunit family. In the C-terminal section; belongs to the urease beta subunit family. In terms of assembly, heterohexamer of 3 UreC (alpha) and 3 UreAB (gamma/beta) subunits.

It is found in the cytoplasm. The catalysed reaction is urea + 2 H2O + H(+) = hydrogencarbonate + 2 NH4(+). It functions in the pathway nitrogen metabolism; urea degradation; CO(2) and NH(3) from urea (urease route): step 1/1. This is Urease subunit gamma/beta from Streptomyces avermitilis (strain ATCC 31267 / DSM 46492 / JCM 5070 / NBRC 14893 / NCIMB 12804 / NRRL 8165 / MA-4680).